Consider the following 201-residue polypeptide: dTTP/UTP pyrophosphatase (201 aa).

Residue D73 is the Proton acceptor of the active site.

This sequence belongs to the Maf family. YhdE subfamily. The cofactor is a divalent metal cation.

Its subcellular location is the cytoplasm. It catalyses the reaction dTTP + H2O = dTMP + diphosphate + H(+). The enzyme catalyses UTP + H2O = UMP + diphosphate + H(+). Functionally, nucleoside triphosphate pyrophosphatase that hydrolyzes dTTP and UTP. May have a dual role in cell division arrest and in preventing the incorporation of modified nucleotides into cellular nucleic acids. The protein is dTTP/UTP pyrophosphatase of Pseudomonas aeruginosa (strain ATCC 15692 / DSM 22644 / CIP 104116 / JCM 14847 / LMG 12228 / 1C / PRS 101 / PAO1).